Consider the following 112-residue polypeptide: Small ribosomal subunit protein bS6 (112 aa).

It belongs to the bacterial ribosomal protein bS6 family.

Functionally, binds together with bS18 to 16S ribosomal RNA. The polypeptide is Small ribosomal subunit protein bS6 (Chlamydia caviae (strain ATCC VR-813 / DSM 19441 / 03DC25 / GPIC) (Chlamydophila caviae)).